Reading from the N-terminus, the 386-residue chain is MANLFDAPQFIEDAPSLAVNAESHTTATQPAVIFDDVGKVFANTRGVATAALANVTLNVARGEVFGIIGRSGAGKSTLLRLVNGLEKPSSGAVRVNGVSVGELDERGLVTLRRRIGMVFQHFNLLSAKTVRENIALPLKIAGVPKAAIEKKVDALLELVGLSAKRDAYPASLSGGQKQRVGIARALVTDPDILLCDEATSALDPETTQAILALLRDINQRLNLTVVLITHEMQVIREVCDTVAVIERGEVVETGPVWRVFGDPQHDATRALLRTLVHDLPTDLAERVKPLHDIAQADAQILLDVRFTGADAREPDLGGLASALSVEGGRVSFVHGGIDRIQGHAQGRLVVSAQVRANADSTVQAQIATLLERARRYANHVEVLGYV.

Positions 32–272 constitute an ABC transporter domain; that stretch reads VIFDDVGKVF…PQHDATRALL (241 aa). An ATP-binding site is contributed by 69–76; that stretch reads GRSGAGKS.

It belongs to the ABC transporter superfamily. Methionine importer (TC 3.A.1.24) family. The complex is composed of two ATP-binding proteins (MetN), two transmembrane proteins (MetI) and a solute-binding protein (MetQ).

It is found in the cell inner membrane. The enzyme catalyses L-methionine(out) + ATP + H2O = L-methionine(in) + ADP + phosphate + H(+). It carries out the reaction D-methionine(out) + ATP + H2O = D-methionine(in) + ADP + phosphate + H(+). Its function is as follows. Part of the ABC transporter complex MetNIQ involved in methionine import. Responsible for energy coupling to the transport system. In Paraburkholderia xenovorans (strain LB400), this protein is Methionine import ATP-binding protein MetN 2.